Reading from the N-terminus, the 374-residue chain is MNTRAKAPEETTVVVGMSGGVDSSVTAYLLKQQGYNVIGIFMKNWDDTDENGFCTATEDYEDVIAVANQIGIPYYAVNFEKEYWDKVFTYFLDEYKLGRTPNPDVMCNKEIKFKAFLDHAMRLGADFVATGHYARAVYEDGEHKLLRGVDTNKDQTYFLNQLSQDQIAKAMFPIGHMEKSEVRKIAEEANLATAKKKDSTGICFIGERNFKQFLSQYLPAQPGEMRTLDGKTMGRHDGLMYYTMGQRHGLGIGGDGEPWFVVGKNLQDNILFVEQGFHNELLYSEGLYASDISWTATMPAGTEFRCTAKFRYRQTDTPVTVRVLDGGRLDVAFDERQRAITPGQAVVFYDGDVCLGGATIDDAYKAGQALTYLA.

ATP contacts are provided by residues 16–23 and M42; that span reads GMSGGVDS. The interaction with target base in tRNA stretch occupies residues 102-104; it reads NPD. Catalysis depends on C107, which acts as the Nucleophile. A disulfide bridge links C107 with C203. G131 lines the ATP pocket. Residues 153–155 form an interaction with tRNA region; that stretch reads KDQ. The Cysteine persulfide intermediate role is filled by C203. The interval 311–312 is interaction with tRNA; the sequence is RY.

This sequence belongs to the MnmA/TRMU family.

It localises to the cytoplasm. It carries out the reaction S-sulfanyl-L-cysteinyl-[protein] + uridine(34) in tRNA + AH2 + ATP = 2-thiouridine(34) in tRNA + L-cysteinyl-[protein] + A + AMP + diphosphate + H(+). Functionally, catalyzes the 2-thiolation of uridine at the wobble position (U34) of tRNA, leading to the formation of s(2)U34. This chain is tRNA-specific 2-thiouridylase MnmA, found in Exiguobacterium sibiricum (strain DSM 17290 / CCUG 55495 / CIP 109462 / JCM 13490 / 255-15).